Consider the following 436-residue polypeptide: Mitochondrial substrate carrier family protein Y (436 aa).

The segment at 1 to 102 (MENNNKNINT…NINNNNINKK (102 aa)) is disordered. The Mitochondrial intermembrane segment spans residues 1–137 (MENNNKNINT…GGFLAGLSRN (137 aa)). Solcar repeat units lie at residues 135–226 (SRNV…TLKY) and 236–334 (HDTL…LKKQ). A helical membrane pass occupies residues 138 to 158 (VTRIIGSFSSGMAEESAGYPL). Over 159–194 (DLIKTRIQLSQSGVSGGGGTNTSIIKIFKDVIKTEG) the chain is Mitochondrial matrix. The helical transmembrane segment at 195 to 215 (VIGLFKGLSSPLILSALVTAI) threads the bilayer. The Mitochondrial intermembrane portion of the chain corresponds to 216-238 (QFGLFEDTLKYFRKHQYFKNHDT). The chain crosses the membrane as a helical span at residues 239–259 (LSLLFSGSIAGFAQSFITCPV). Residues 260–313 (DLVKIQMQIQGIPSSQPNSNNNNNNNKAKGNSYFTKLIYREKGLLGFYQGLSPT) are Mitochondrial matrix-facing. A helical transmembrane segment spans residues 314–334 (LFRDVPGLAIFFTTYETLKKQ). The Mitochondrial intermembrane portion of the chain corresponds to 335-347 (FGQPELSTQSPTE). Residues 348 to 368 (FIKSFIPIVLSGGSAGVFYHG) form a helical membrane-spanning segment. The Solcar 3 repeat unit spans residues 350–436 (KSFIPIVLSG…FLVYEMVINL (87 aa)). Residues 369-413 (LTHPFDIAKTLIQSDRSATKYKGTFDCLKQVYQNQGPKSLFKGFS) lie on the Mitochondrial matrix side of the membrane. Residues 414 to 434 (AVAIKSFQSNAVGFLVYEMVI) traverse the membrane as a helical segment. At 435 to 436 (NL) the chain is on the mitochondrial intermembrane side.

It belongs to the mitochondrial carrier (TC 2.A.29) family.

The protein localises to the mitochondrion inner membrane. Functionally, mitochondrial solute carriers shuttle metabolites, nucleotides, and cofactors through the mitochondrial inner membrane. This chain is Mitochondrial substrate carrier family protein Y (mcfY), found in Dictyostelium discoideum (Social amoeba).